The sequence spans 147 residues: 3-dehydroquinate dehydratase (147 aa).

Tyr23 (proton acceptor) is an active-site residue. Asn75, His81, and Asp88 together coordinate substrate. The active-site Proton donor is His101. Residues 102–103 and Arg112 contribute to the substrate site; that span reads LS.

The protein belongs to the type-II 3-dehydroquinase family. Homododecamer.

It catalyses the reaction 3-dehydroquinate = 3-dehydroshikimate + H2O. The protein operates within metabolic intermediate biosynthesis; chorismate biosynthesis; chorismate from D-erythrose 4-phosphate and phosphoenolpyruvate: step 3/7. Functionally, catalyzes a trans-dehydration via an enolate intermediate. This is 3-dehydroquinate dehydratase from Nitrosococcus oceani (strain ATCC 19707 / BCRC 17464 / JCM 30415 / NCIMB 11848 / C-107).